The sequence spans 508 residues: Protein FAM227B (508 aa).

Disordered stretches follow at residues 1–22 (MAGQ…MQEP) and 485–508 (ASLS…EEEY). Residues 486 to 497 (SLSSSSSSSPSS) show a composition bias toward low complexity.

The protein belongs to the FAM227 family.

This is Protein FAM227B (FAM227B) from Homo sapiens (Human).